The sequence spans 93 residues: Bombyxin-related peptide B (93 aa).

An N-terminal signal peptide occupies residues 1–21 (MKFVLVLVSLALLVSLASVQG). 3 disulfides stabilise this stretch: cysteine 25-cysteine 80, cysteine 37-cysteine 93, and cysteine 79-cysteine 84. Positions 47–71 (SGAMGAAAMYGTRGWRWAAMGGNRG) are cleaved as a propeptide — c peptide like.

This sequence belongs to the insulin family. As to quaternary structure, heterodimer of a B chain and an A chain linked by two disulfide bonds. Located in 4 pairs of medial neurosecretory cells in the brain.

It localises to the secreted. The sequence is that of Bombyxin-related peptide B from Agrius convolvuli (Convolvulus hawk-moth).